The sequence spans 162 residues: tRNA (cytidine(34)-2'-O)-methyltransferase (162 aa).

Positions 80, 102, 124, and 132 each coordinate S-adenosyl-L-methionine.

It belongs to the class IV-like SAM-binding methyltransferase superfamily. RNA methyltransferase TrmH family. TrmL subfamily. In terms of assembly, homodimer.

It localises to the cytoplasm. The catalysed reaction is cytidine(34) in tRNA + S-adenosyl-L-methionine = 2'-O-methylcytidine(34) in tRNA + S-adenosyl-L-homocysteine + H(+). It carries out the reaction 5-carboxymethylaminomethyluridine(34) in tRNA(Leu) + S-adenosyl-L-methionine = 5-carboxymethylaminomethyl-2'-O-methyluridine(34) in tRNA(Leu) + S-adenosyl-L-homocysteine + H(+). Methylates the ribose at the nucleotide 34 wobble position in the two leucyl isoacceptors tRNA(Leu)(CmAA) and tRNA(Leu)(cmnm5UmAA). Catalyzes the methyl transfer from S-adenosyl-L-methionine to the 2'-OH of the wobble nucleotide. This chain is tRNA (cytidine(34)-2'-O)-methyltransferase, found in Acidovorax sp. (strain JS42).